The primary structure comprises 642 residues: Threonine--tRNA ligase (642 aa).

Positions 1-61 (MPVITLPDGS…HEDASLSIIT (61 aa)) constitute a TGS domain. The tract at residues 243–534 (DHRKIGKQLD…LIEEYAGRFP (292 aa)) is catalytic. 3 residues coordinate Zn(2+): Cys-334, His-385, and His-511.

Belongs to the class-II aminoacyl-tRNA synthetase family. In terms of assembly, homodimer. It depends on Zn(2+) as a cofactor.

The protein resides in the cytoplasm. The enzyme catalyses tRNA(Thr) + L-threonine + ATP = L-threonyl-tRNA(Thr) + AMP + diphosphate + H(+). In terms of biological role, catalyzes the attachment of threonine to tRNA(Thr) in a two-step reaction: L-threonine is first activated by ATP to form Thr-AMP and then transferred to the acceptor end of tRNA(Thr). Also edits incorrectly charged L-seryl-tRNA(Thr). The sequence is that of Threonine--tRNA ligase from Shewanella amazonensis (strain ATCC BAA-1098 / SB2B).